The chain runs to 78 residues: Acyl carrier protein (78 aa).

In terms of domain architecture, Carrier spans 2–77 (SDIAERVKKI…DAIKFLEKNS (76 aa)). An O-(pantetheine 4'-phosphoryl)serine modification is found at S37.

Belongs to the acyl carrier protein (ACP) family. Post-translationally, 4'-phosphopantetheine is transferred from CoA to a specific serine of apo-ACP by AcpS. This modification is essential for activity because fatty acids are bound in thioester linkage to the sulfhydryl of the prosthetic group.

The protein resides in the cytoplasm. It functions in the pathway lipid metabolism; fatty acid biosynthesis. In terms of biological role, carrier of the growing fatty acid chain in fatty acid biosynthesis. In Methylorubrum extorquens (strain CM4 / NCIMB 13688) (Methylobacterium extorquens), this protein is Acyl carrier protein.